Consider the following 188-residue polypeptide: Defensin-like protein 99 (188 aa).

The signal sequence occupies residues Met-1–Ala-28. 7 disulfide bridges follow: Cys-37–Cys-95, Cys-45–Cys-77, Cys-58–Cys-92, Cys-62–Cys-94, Cys-123–Cys-178, Cys-137–Cys-175, and Cys-141–Cys-177.

Belongs to the DEFL family.

The protein localises to the secreted. This is Defensin-like protein 99 from Arabidopsis thaliana (Mouse-ear cress).